A 314-amino-acid chain; its full sequence is Aspartate carbamoyltransferase catalytic subunit (314 aa).

2 residues coordinate carbamoyl phosphate: Arg55 and Thr56. Lys83 contributes to the L-aspartate binding site. Carbamoyl phosphate contacts are provided by Arg105, His139, and Gln142. Residues Arg172 and Arg226 each contribute to the L-aspartate site. 2 residues coordinate carbamoyl phosphate: Gly267 and Pro268.

This sequence belongs to the aspartate/ornithine carbamoyltransferase superfamily. ATCase family. As to quaternary structure, heterododecamer (2C3:3R2) of six catalytic PyrB chains organized as two trimers (C3), and six regulatory PyrI chains organized as three dimers (R2).

It carries out the reaction carbamoyl phosphate + L-aspartate = N-carbamoyl-L-aspartate + phosphate + H(+). The protein operates within pyrimidine metabolism; UMP biosynthesis via de novo pathway; (S)-dihydroorotate from bicarbonate: step 2/3. In terms of biological role, catalyzes the condensation of carbamoyl phosphate and aspartate to form carbamoyl aspartate and inorganic phosphate, the committed step in the de novo pyrimidine nucleotide biosynthesis pathway. In Rhodococcus jostii (strain RHA1), this protein is Aspartate carbamoyltransferase catalytic subunit.